The chain runs to 297 residues: Elongation factor Ts (297 aa).

Positions 82-85 (TDFV) are involved in Mg(2+) ion dislocation from EF-Tu. Residues 223 to 265 (AQTAAAAETAPPEVSEPEPAAAVTAEEPTPEPVAAAEQPAEPV) are compositionally biased toward low complexity. Residues 223–297 (AQTAAAAETA…GKSRSNKKKK (75 aa)) form a disordered region. Positions 286–297 (SGGKSRSNKKKK) are enriched in basic residues.

The protein belongs to the EF-Ts family.

The protein resides in the cytoplasm. Its function is as follows. Associates with the EF-Tu.GDP complex and induces the exchange of GDP to GTP. It remains bound to the aminoacyl-tRNA.EF-Tu.GTP complex up to the GTP hydrolysis stage on the ribosome. This chain is Elongation factor Ts, found in Thermosynechococcus vestitus (strain NIES-2133 / IAM M-273 / BP-1).